The primary structure comprises 508 residues: Tryptamine 4-monooxygenase (508 aa).

The signal sequence occupies residues 1–19 (MIAVLFSFVIAGCIYYIVS). C439 contributes to the heme binding site.

The protein belongs to the cytochrome P450 family. Requires heme as cofactor.

It catalyses the reaction tryptamine + AH2 + O2 = 4-hydroxytryptamine + A + H2O. Its pathway is secondary metabolite biosynthesis. Cytochrome P450 monooxygenase; part of the gene cluster that mediates the biosynthesis of psilocybin, a psychotropic tryptamine-derived natural product. The first step in the pathway is the decarboxylation of L-tryptophan to tryptamine by the decarboxylase psiD. 4-hydroxy-L-tryptophan is accepted as substrate by psiD as well. The cytochrome P450 monooxygenase psiH then converts tryptamine to 4-hydroxytryptamine. The kinase psiK catalyzes the 4-O-phosphorylation step by converting 4-hydroxytryptamine into norbaeocystin. The methyltransferase psiM then catalyzes iterative methyl transfer to the amino group of norbaeocystin to yield psilocybin via a monomethylated intermediate, baeocystin. This chain is Tryptamine 4-monooxygenase, found in Psilocybe cubensis (Psychedelic mushroom).